Here is a 70-residue protein sequence, read N- to C-terminus: Conotoxin Cal6.11 (70 aa).

The signal sequence occupies residues 1–22 (MKLTCVLIIAVLILTACQFIAA). A propeptide spanning residues 23 to 43 (DNTEYRKWRRSGTSTGMRLGS) is cleaved from the precursor. 3 disulfides stabilise this stretch: Cys-46–Cys-57, Cys-50–Cys-62, and Cys-56–Cys-69. Pro-48 and Pro-58 each carry 4-hydroxyproline. 4-carboxyglutamate occurs at positions 60 and 67.

It belongs to the conotoxin O1 superfamily. As to expression, expressed by the venom duct.

It localises to the secreted. In terms of biological role, probable neurotoxin with unknown target. Possibly targets ion channels. The sequence is that of Conotoxin Cal6.11 from Californiconus californicus (California cone).